The following is a 356-amino-acid chain: Nitric oxide synthase oxygenase (356 aa).

Cys63 contacts heme.

The protein belongs to the NOS family. Bacterial NOS oxygenase subfamily. As to quaternary structure, homodimer. Forms a complex with trpS2; one homodimer of trpS2 binds one homodimer of nos. The cofactor is heme. Requires (6S)-5,6,7,8-tetrahydrofolate as cofactor.

It catalyses the reaction 3 reduced [flavodoxin] + 2 L-arginine + 4 O2 = 3 oxidized [flavodoxin] + 2 L-citrulline + 2 nitric oxide + 4 H2O + 5 H(+). With respect to regulation, nitric oxide synthase activity is increased by trpS2. Functionally, catalyzes the production of nitric oxide. The complex between TrpRS II and nitric oxide synthase oxygenase catalyzes the regioselective nitration of tryptophan at the 4-position. This Deinococcus radiodurans (strain ATCC 13939 / DSM 20539 / JCM 16871 / CCUG 27074 / LMG 4051 / NBRC 15346 / NCIMB 9279 / VKM B-1422 / R1) protein is Nitric oxide synthase oxygenase (nos).